The following is a 435-amino-acid chain: Light-independent protochlorophyllide reductase subunit N (435 aa).

Cysteine 23, cysteine 48, and cysteine 108 together coordinate [4Fe-4S] cluster.

The protein belongs to the BchN/ChlN family. Protochlorophyllide reductase is composed of three subunits; ChlL, ChlN and ChlB. Forms a heterotetramer of two ChlB and two ChlN subunits. Requires [4Fe-4S] cluster as cofactor.

The protein resides in the plastid. It localises to the chloroplast. The enzyme catalyses chlorophyllide a + oxidized 2[4Fe-4S]-[ferredoxin] + 2 ADP + 2 phosphate = protochlorophyllide a + reduced 2[4Fe-4S]-[ferredoxin] + 2 ATP + 2 H2O. It participates in porphyrin-containing compound metabolism; chlorophyll biosynthesis (light-independent). Component of the dark-operative protochlorophyllide reductase (DPOR) that uses Mg-ATP and reduced ferredoxin to reduce ring D of protochlorophyllide (Pchlide) to form chlorophyllide a (Chlide). This reaction is light-independent. The NB-protein (ChlN-ChlB) is the catalytic component of the complex. The chain is Light-independent protochlorophyllide reductase subunit N from Chlorella vulgaris (Green alga).